The chain runs to 347 residues: Olfactory receptor 1L6 (347 aa).

Residues 1–62 (MSYFYRLKLM…GLSSNPQLQK (62 aa)) are Extracellular-facing. An N-linked (GlcNAc...) asparagine glycan is attached at asparagine 41. Residues 63-86 (PLFAIFLIMYLLAAVGNVLIIPAI) traverse the membrane as a helical segment. The Cytoplasmic portion of the chain corresponds to 87–94 (YSDPRLHT). A helical membrane pass occupies residues 95-116 (PMYFFLSNLSFMDICFTTVIVP). The Extracellular portion of the chain corresponds to 117 to 137 (KMLVNFLSETKVISYVGCLAQ). A disulfide bond links cysteine 134 and cysteine 226. Residues 138-157 (MYFFMAFGNTDSYLLASMAI) form a helical membrane-spanning segment. Residues 158–176 (DRLVAICNPLHYDVVMKPR) lie on the Cytoplasmic side of the membrane. Residues 177–195 (HCLLMLLGSCSISHLHSLF) form a helical membrane-spanning segment. Residues 196–233 (RVLLMSRLSFCASHIIKHFFCDTQPVLKLSCSDTSSSQ) are Extracellular-facing. A helical transmembrane segment spans residues 234 to 256 (MVVMTETLAVIVTPFLCIIFSYL). Over 257-273 (RIMVTVLRIPSAAGKWK) the chain is Cytoplasmic. A helical transmembrane segment spans residues 274–296 (AFSTCGSHLTAVALFYGSIIYVY). Topologically, residues 297-309 (FRPLSMYSVVRDR) are extracellular. Residues 310 to 329 (VATVMYTVVTPMLNPFIYSL) form a helical membrane-spanning segment. The Cytoplasmic portion of the chain corresponds to 330 to 347 (RNKDMKRGLKKLQDRIYR).

This sequence belongs to the G-protein coupled receptor 1 family.

The protein localises to the cell membrane. Its function is as follows. Odorant receptor. This Homo sapiens (Human) protein is Olfactory receptor 1L6 (OR1L6).